We begin with the raw amino-acid sequence, 377 residues long: Alkane 1-monooxygenase 2 (377 aa).

Helical transmembrane passes span 17-37, 43-63, 87-107, and 116-136; these read GYWI…WSLG, AWPW…DAIV, VLSL…GWIL, and VGQL…GITV. The Fe cation site is built by His-138, His-142, His-168, His-172, and His-173. The chain crosses the membrane as a helical span at residues 236 to 256; the sequence is ALFLLGFSLAFGWLGAIFFLG. The Fe cation site is built by His-312, His-315, and His-316.

It belongs to the fatty acid desaturase type 1 family. AlkB subfamily. Fe(3+) is required as a cofactor.

It is found in the cell inner membrane. The enzyme catalyses octane + 2 reduced [rubredoxin] + O2 + 2 H(+) = 2 oxidized [rubredoxin] + octan-1-ol + H2O. It participates in hydrocarbon metabolism; alkane degradation. Its function is as follows. Catalyzes the hydroxylation of n-alkanes in the presence of a NADH-rubredoxin reductase and rubredoxin. It preferably hydroxylases C12-C20 hydrocarbons. This chain is Alkane 1-monooxygenase 2 (alkB2), found in Pseudomonas aeruginosa (strain ATCC 15692 / DSM 22644 / CIP 104116 / JCM 14847 / LMG 12228 / 1C / PRS 101 / PAO1).